We begin with the raw amino-acid sequence, 1193 residues long: MKSFKWKENTEEKDDEEKTNEKEQNKPKEIDSKTEQEAKQEKVSEADNSVKDQEGITNKNRPEDISYVDDSTIQAKTALTVEAITNIKGHLIESDQKLADERASQYLQTLTNNAVRYTTTFGISEISDEILIPYYHEIDFQGSDKELPSLFSFETFVNEYYGTDLLTYENEKFKTMMCDHPALSRSSEIFKVNAYKISIKWTGETFNPSIGDPSNIGTTSLIKNIAYVGVHNSDNYKDRKLYSRLKMFLELAANCNIILKGCATRPLGIDYELTKVSKKLNGAKILYNDKAHIIYNGIYHPVTPFCDKVNDILKEGDVDIDFGKIFKYGREVVTKINTYDILNKGYAAIDQFTAYLINMGMQRLLDHRMNANSYKDLTQANYPSRVSLHVFDTLLDEFLYVYKPTDQDWEFCLFVIMIDKEVRSLIMAKTKQMMLSRNLFGQSEIGLKLTNLITRRVQGNIAKNAADYFINVMSSGSIESLCNILCSEMYARFSKFNIECSYLETEYLDLFKFLEILLAFIITPRLAWWNSHKFGKHLYDLMSVFCRSELIAYEARYGCFIKFERSAWVKVDKHVSVYGENDLYDGIYFSFLISRTYSAEEIKAFPFISKIYSLIEPLGDYINLDRKTRAKYPFFETTVRGYLPCSIISYTDITTNNPVNTRVNNIGASIIDLSQRYFTHKPTKTSTKEAYDLILDTIGNTANNLGILMHSTVAPMLATLYDTFLFFADGFNKTSPWVVPRKLGYSGYNVYADRNKSDADRATYLIGGRAIVIPRNLDSTNSMIYTYIGIFVHGVVRCDMVTSTGSYITSSHYDPDSISIMPFNGSEITTLALKVVNHSKRINTVFTLFNYLHSKSTDEILSPVRERLSKFWTTSNARALLNEITRIFNCPIERYFTQMNAYDTMHSDPRVYKPTLYSVSSTGNIDSVQPANCAVNKQYEFGDTYLNEMLKVISHVAFDDELPLFRQTEGLVCGYFTSSSNSPDDYFSVDEDTLYFSIDLDEHPEVFTTVGTNGFSIQLQFKKGNDDHAYTNPMSKDIPSIKFLINRIGNLNAHFVQFINRMLSTQRHLIVLRKVVVDYNVITLGSWNDYTPTSSNVFDQFVKDRDLINIKLDFYDTRFIIQNQSNQLLSQYLFESYRNITPLKDFVVMGGIFGNPNRAESKLTDINKDIYCFGDDNDQTTKYFTSKKSKRVV.

Basic and acidic residues-rich tracts occupy residues methionine 1–threonine 10 and threonine 19–aspartate 64. The tract at residues methionine 1–aspartate 64 is disordered.

The protein belongs to the turreted BTV-fold inner capsid family. As to quaternary structure, homodecamer; each decamer is made up of two conformers of VP2, called VP2A and VP2B. 12 homodecamers assemble to form an icosahedral capsid.

It localises to the virion. Functionally, inner capsid protein that self-assembles to form an icosahedral capsid with a T=2 symmetry, which consists of 120 copies of VP2, with channels at each of its five-fold vertices. This capsid constitutes the innermost concentric layer of the viral mature particle. The protein is Inner capsid protein S2 (S2) of Saccharum officinarum (Sugarcane).